We begin with the raw amino-acid sequence, 424 residues long: Splicing factor 3B subunit 4 (424 aa).

An N-acetylalanine modification is found at alanine 2. RRM domains lie at alanine 13 to alanine 91 and alanine 100 to lysine 179. Position 56 is a phosphotyrosine (tyrosine 56). A disordered region spans residues proline 207–glutamine 424. A compositionally biased stretch (low complexity) spans asparagine 222–glycine 231. The span at leucine 232–proline 268 shows a compositional bias: pro residues. 2 stretches are compositionally biased toward low complexity: residues glycine 269–threonine 280 and histidine 303–histidine 323. 2 stretches are compositionally biased toward pro residues: residues glutamine 332 to proline 381 and proline 388 to glutamine 424.

The protein belongs to the SF3B4 family. As to quaternary structure, component of the 17S U2 SnRNP complex, a ribonucleoprotein complex that contains small nuclear RNA (snRNA) U2 and a number of specific proteins. Part of the SF3B subcomplex of the 17S U2 SnRNP complex. SF3B associates with the splicing subcomplex SF3A and a 12S RNA unit to form the U2 small nuclear ribonucleoproteins complex (U2 snRNP). SF3B4 has been found in complex spliceosome 'B' and 'C' as well. Component of the minor (U12-type spliceosome) spliceosome. Found in a complex with PRMT9, SF3B2 and SF3B4.

The protein resides in the nucleus. In terms of biological role, component of the 17S U2 SnRNP complex of the spliceosome, a large ribonucleoprotein complex that removes introns from transcribed pre-mRNAs. The 17S U2 SnRNP complex (1) directly participates in early spliceosome assembly and (2) mediates recognition of the intron branch site during pre-mRNA splicing by promoting the selection of the pre-mRNA branch-site adenosine, the nucleophile for the first step of splicing. Within the 17S U2 SnRNP complex, SF3B4 is part of the SF3B subcomplex, which is required for 'A' complex assembly formed by the stable binding of U2 snRNP to the branchpoint sequence in pre-mRNA. Sequence independent binding of SF3A and SF3B subcomplexes upstream of the branch site is essential, it may anchor U2 snRNP to the pre-mRNA. May also be involved in the assembly of the 'E' complex. Also acts as a component of the minor spliceosome, which is involved in the splicing of U12-type introns in pre-mRNAs. The chain is Splicing factor 3B subunit 4 (SF3B4) from Homo sapiens (Human).